The chain runs to 140 residues: Gonadotropin subunit beta-2 (140 aa).

An N-terminal signal peptide occupies residues 1–23; it reads MGTPVKILVVLFSVIVLLAVAQS. 6 cysteine pairs are disulfide-bonded: Cys-29/Cys-77, Cys-43/Cys-92, Cys-46/Cys-130, Cys-54/Cys-108, Cys-58/Cys-110, and Cys-113/Cys-120. An N-linked (GlcNAc...) asparagine glycan is attached at Asn-33.

This sequence belongs to the glycoprotein hormones subunit beta family. In terms of assembly, heterodimer of an alpha and a beta chain.

It is found in the secreted. In terms of biological role, involved in gametogenesis and steroidogenesis. The polypeptide is Gonadotropin subunit beta-2 (cgbb) (Carassius auratus (Goldfish)).